Reading from the N-terminus, the 200-residue chain is UPF0488 protein CG14286 (200 aa).

2 disordered regions span residues 1-28 (MHKRRTAKSINKPPPIQGAIKKPTPVAE) and 139-174 (KDFRFNFPSPAEDTSSKEPQPVQDFDPSSLQPAEAG).

Belongs to the UPF0488 family.

In Drosophila melanogaster (Fruit fly), this protein is UPF0488 protein CG14286.